The sequence spans 261 residues: 5'-nucleotidase SurE (261 aa).

4 residues coordinate a divalent metal cation: D8, D9, S39, and N94.

The protein belongs to the SurE nucleotidase family. It depends on a divalent metal cation as a cofactor.

It localises to the cytoplasm. The catalysed reaction is a ribonucleoside 5'-phosphate + H2O = a ribonucleoside + phosphate. Functionally, nucleotidase that shows phosphatase activity on nucleoside 5'-monophosphates. The chain is 5'-nucleotidase SurE from Methanopyrus kandleri (strain AV19 / DSM 6324 / JCM 9639 / NBRC 100938).